The primary structure comprises 248 residues: MAAQSAPKVVLKSTTKMSLNERFTNMLKNKQPMPVNIRASMQQQQQLASARNRRLAQQMENRPSVQAALKLKQSLKQRLGKSNIQARLGRPIGALARGAIGGRGLPIIQRGLPRGGLRGGRATRTLLRGGMSLRGQNLLRGGRAVAPRMGLRRGGVRGRGGPGRGGLGRGAMGRGGIGGRGRGMIGRGRGGFGGRGRGRGRGRGALARPVLTKEQLDNQLDAYMSKTKGHLDAELDAYMAQTDPETND.

N-acetylalanine is present on alanine 2. A phosphoserine mark is found at serine 40, serine 49, and serine 64. Lysine 70 participates in a covalent cross-link: Glycyl lysine isopeptide (Lys-Gly) (interchain with G-Cter in SUMO2). A disordered region spans residues 151–204; it reads LRRGGVRGRGGPGRGGLGRGAMGRGGIGGRGRGMIGRGRGGFGGRGRGRGRGRG. The segment at 153–206 is interaction with PRMT1; sequence RGGVRGRGGPGRGGLGRGAMGRGGIGGRGRGMIGRGRGGFGGRGRGRGRGRGAL. The segment covering 157 to 195 has biased composition (gly residues); sequence RGRGGPGRGGLGRGAMGRGGIGGRGRGMIGRGRGGFGGR. Positions 194–203 match the GAR motif; involved in 5hmC binding motif; that stretch reads GRGRGRGRGR. Threonine 242 carries the post-translational modification Phosphothreonine.

As to quaternary structure, interacts with PRMT1 and PRMT5. Interacts with the 5FMC complex; the interaction is methylation-dependent. Interacts with FYTTD1, SET and PRC1 complex members CBX4, RNF2 and PHC2; the interactions are methylation-independent. Interacts with ZNF148. Interacts with WDR77 and ER. Post-translationally, asymmetrically methylated by PRMT1. Symmetrically methylated by PRMT5.

It localises to the nucleus. The protein resides in the nucleolus. Its subcellular location is the nucleoplasm. It is found in the nucleus speckle. Plays an important role in the ligand-dependent activation of estrogen receptor target genes. May play a role in the silencing of fetal globin genes. Recruits the 5FMC complex to ZNF148, leading to desumoylation of ZNF148 and subsequent transactivation of ZNF148 target genes. Required for the tumorigenicity of glioblastoma cells. Binds to 5-hydroxymethylcytosine (5hmC) and associates with the methylosome complex containing PRMT1, PRMT5, MEP50 and ERH. The CHTOP-methylosome complex associated with 5hmC methylates H4R3 and transactivates genes involved in glioblastomagenesis. This chain is Chromatin target of PRMT1 protein (CHTOP), found in Bos taurus (Bovine).